Here is a 101-residue protein sequence, read N- to C-terminus: NAD(P)H-quinone oxidoreductase subunit 4L, chloroplastic (101 aa).

3 consecutive transmembrane segments (helical) span residues 2–22 (ILEHVLVLSAYLFLIGLYGLI), 32–52 (MCLELILNAVNMNFVTFSDFF), and 61–81 (IFCIFVIAIAAAEAAIGLAIV).

This sequence belongs to the complex I subunit 4L family. In terms of assembly, NDH is composed of at least 16 different subunits, 5 of which are encoded in the nucleus.

It is found in the plastid. Its subcellular location is the chloroplast thylakoid membrane. The enzyme catalyses a plastoquinone + NADH + (n+1) H(+)(in) = a plastoquinol + NAD(+) + n H(+)(out). It carries out the reaction a plastoquinone + NADPH + (n+1) H(+)(in) = a plastoquinol + NADP(+) + n H(+)(out). Functionally, NDH shuttles electrons from NAD(P)H:plastoquinone, via FMN and iron-sulfur (Fe-S) centers, to quinones in the photosynthetic chain and possibly in a chloroplast respiratory chain. The immediate electron acceptor for the enzyme in this species is believed to be plastoquinone. Couples the redox reaction to proton translocation, and thus conserves the redox energy in a proton gradient. In Arabidopsis thaliana (Mouse-ear cress), this protein is NAD(P)H-quinone oxidoreductase subunit 4L, chloroplastic.